Here is a 236-residue protein sequence, read N- to C-terminus: Probable transcriptional regulatory protein Suden_1389 (236 aa).

Belongs to the TACO1 family.

The protein localises to the cytoplasm. This is Probable transcriptional regulatory protein Suden_1389 from Sulfurimonas denitrificans (strain ATCC 33889 / DSM 1251) (Thiomicrospira denitrificans (strain ATCC 33889 / DSM 1251)).